The following is a 310-amino-acid chain: GMP synthase [glutamine-hydrolyzing] subunit B (310 aa).

One can recognise a GMPS ATP-PPase domain in the interval 2 to 185 (FKTEPFIEES…LGLPDQIAHR (184 aa)). 29-35 (SGGVDSS) is an ATP binding site.

Heterodimer composed of a glutamine amidotransferase subunit (A) and a GMP-binding subunit (B).

The catalysed reaction is XMP + L-glutamine + ATP + H2O = GMP + L-glutamate + AMP + diphosphate + 2 H(+). Its pathway is purine metabolism; GMP biosynthesis; GMP from XMP (L-Gln route): step 1/1. Its function is as follows. Catalyzes the synthesis of GMP from XMP. The sequence is that of GMP synthase [glutamine-hydrolyzing] subunit B from Methanococcus maripaludis (strain C7 / ATCC BAA-1331).